Here is a 25-residue protein sequence, read N- to C-terminus: Cysteine-rich venom protein 25 (25 aa).

The interval N1–L25 is disordered.

This sequence belongs to the CRISP family. In terms of processing, contains 8 disulfide bonds. As to expression, expressed by the venom gland.

The protein resides in the secreted. The protein is Cysteine-rich venom protein 25 of Naja haje haje (Egyptian cobra).